Here is a 247-residue protein sequence, read N- to C-terminus: 5'-nucleotidase SurE (247 aa).

Residues aspartate 8, aspartate 9, serine 39, and asparagine 91 each contribute to the a divalent metal cation site.

The protein belongs to the SurE nucleotidase family. The cofactor is a divalent metal cation.

The protein resides in the cytoplasm. The catalysed reaction is a ribonucleoside 5'-phosphate + H2O = a ribonucleoside + phosphate. Functionally, nucleotidase that shows phosphatase activity on nucleoside 5'-monophosphates. In Laribacter hongkongensis (strain HLHK9), this protein is 5'-nucleotidase SurE.